Reading from the N-terminus, the 397-residue chain is Riboflavin biosynthesis protein RibBA (397 aa).

Residues Met-1 to His-199 form a DHBP synthase region. D-ribulose 5-phosphate is bound by residues Arg-26–Glu-27, Asp-31, Arg-138–Thr-142, and Glu-162. A Mg(2+)-binding site is contributed by Glu-27. A Mg(2+)-binding site is contributed by His-141. Positions His-200–Leu-397 are GTP cyclohydrolase II. Arg-250–Glu-254 contributes to the GTP binding site. Zn(2+)-binding residues include Cys-255, Cys-266, and Cys-268. GTP is bound by residues Gln-271, Glu-293–Arg-295, and Thr-315. Asp-327 acts as the Proton acceptor; for GTP cyclohydrolase activity in catalysis. The active-site Nucleophile; for GTP cyclohydrolase activity is the Arg-329. Residues Thr-350 and Lys-355 each contribute to the GTP site.

It in the N-terminal section; belongs to the DHBP synthase family. This sequence in the C-terminal section; belongs to the GTP cyclohydrolase II family. Mg(2+) is required as a cofactor. The cofactor is Mn(2+). It depends on Zn(2+) as a cofactor.

It carries out the reaction D-ribulose 5-phosphate = (2S)-2-hydroxy-3-oxobutyl phosphate + formate + H(+). The catalysed reaction is GTP + 4 H2O = 2,5-diamino-6-hydroxy-4-(5-phosphoribosylamino)-pyrimidine + formate + 2 phosphate + 3 H(+). The protein operates within cofactor biosynthesis; riboflavin biosynthesis; 2-hydroxy-3-oxobutyl phosphate from D-ribulose 5-phosphate: step 1/1. It participates in cofactor biosynthesis; riboflavin biosynthesis; 5-amino-6-(D-ribitylamino)uracil from GTP: step 1/4. In terms of biological role, catalyzes the conversion of D-ribulose 5-phosphate to formate and 3,4-dihydroxy-2-butanone 4-phosphate. Its function is as follows. Catalyzes the conversion of GTP to 2,5-diamino-6-ribosylamino-4(3H)-pyrimidinone 5'-phosphate (DARP), formate and pyrophosphate. The chain is Riboflavin biosynthesis protein RibBA from Bacillus mycoides (strain KBAB4) (Bacillus weihenstephanensis).